The chain runs to 353 residues: Photosystem II D2 protein (353 aa).

Position 2 is an N-acetylthreonine (threonine 2). Threonine 2 is modified (phosphothreonine). The helical transmembrane segment at cysteine 41–threonine 61 threads the bilayer. Residue histidine 118 participates in chlorophyll a binding. A helical membrane pass occupies residues glycine 125 to proline 141. 2 residues coordinate pheophytin a: glutamine 130 and asparagine 143. The helical transmembrane segment at valine 153–serine 166 threads the bilayer. Histidine 198 contacts chlorophyll a. Residues alanine 208–aspartate 228 traverse the membrane as a helical segment. A plastoquinone is bound by residues histidine 215 and phenylalanine 262. Histidine 215 lines the Fe cation pocket. Histidine 269 lines the Fe cation pocket. The chain crosses the membrane as a helical span at residues glycine 279–arginine 295.

Belongs to the reaction center PufL/M/PsbA/D family. As to quaternary structure, PSII is composed of 1 copy each of membrane proteins PsbA, PsbB, PsbC, PsbD, PsbE, PsbF, PsbH, PsbI, PsbJ, PsbK, PsbL, PsbM, PsbT, PsbX, PsbY, PsbZ, Psb30/Ycf12, at least 3 peripheral proteins of the oxygen-evolving complex and a large number of cofactors. It forms dimeric complexes. The D1/D2 heterodimer binds P680, chlorophylls that are the primary electron donor of PSII, and subsequent electron acceptors. It shares a non-heme iron and each subunit binds pheophytin, quinone, additional chlorophylls, carotenoids and lipids. There is also a Cl(-1) ion associated with D1 and D2, which is required for oxygen evolution. The PSII complex binds additional chlorophylls, carotenoids and specific lipids. serves as cofactor.

Its subcellular location is the plastid. The protein resides in the chloroplast thylakoid membrane. The catalysed reaction is 2 a plastoquinone + 4 hnu + 2 H2O = 2 a plastoquinol + O2. Photosystem II (PSII) is a light-driven water:plastoquinone oxidoreductase that uses light energy to abstract electrons from H(2)O, generating O(2) and a proton gradient subsequently used for ATP formation. It consists of a core antenna complex that captures photons, and an electron transfer chain that converts photonic excitation into a charge separation. The D1/D2 (PsbA/PsbD) reaction center heterodimer binds P680, the primary electron donor of PSII as well as several subsequent electron acceptors. D2 is needed for assembly of a stable PSII complex. This chain is Photosystem II D2 protein, found in Coffea arabica (Arabian coffee).